We begin with the raw amino-acid sequence, 392 residues long: Selenide, water dikinase 1 (392 aa).

The active site involves C31. Residues K32, 67–69 (GMD), D87, D110, and 161–164 (GGQT) contribute to the ATP site. D69 provides a ligand contact to Mg(2+). D110 contacts Mg(2+). A Mg(2+)-binding site is contributed by D265.

This sequence belongs to the selenophosphate synthase 1 family. Class II subfamily. As to quaternary structure, homodimer. It depends on Mg(2+) as a cofactor.

The protein resides in the cell membrane. It localises to the nucleus membrane. The catalysed reaction is hydrogenselenide + ATP + H2O = selenophosphate + AMP + phosphate + 2 H(+). Its function is as follows. Synthesizes selenophosphate from selenide and ATP. The chain is Selenide, water dikinase 1 (sephs1) from Xenopus laevis (African clawed frog).